A 416-amino-acid polypeptide reads, in one-letter code: Leu/Ile/Val-binding protein homolog 4 (416 aa).

The signal sequence occupies residues 1-26 (MSLKVFLQAGVACAALSLAGAAGASA).

Belongs to the leucine-binding protein family.

In terms of biological role, component of an amino-acid transport system. In Brucella abortus (strain 2308), this protein is Leu/Ile/Val-binding protein homolog 4.